The chain runs to 180 residues: ATP-dependent protease subunit HslV (180 aa).

Residue Thr5 is part of the active site. Na(+)-binding residues include Gly161, Cys164, and Thr167.

The protein belongs to the peptidase T1B family. HslV subfamily. In terms of assembly, a double ring-shaped homohexamer of HslV is capped on each side by a ring-shaped HslU homohexamer. The assembly of the HslU/HslV complex is dependent on binding of ATP.

Its subcellular location is the cytoplasm. It carries out the reaction ATP-dependent cleavage of peptide bonds with broad specificity.. Allosterically activated by HslU binding. In terms of biological role, protease subunit of a proteasome-like degradation complex believed to be a general protein degrading machinery. This Campylobacter jejuni subsp. jejuni serotype O:2 (strain ATCC 700819 / NCTC 11168) protein is ATP-dependent protease subunit HslV.